The sequence spans 314 residues: Ribosomal RNA small subunit methyltransferase H (314 aa).

S-adenosyl-L-methionine contacts are provided by residues 37–39 (GGH), aspartate 56, phenylalanine 86, aspartate 108, and histidine 115.

Belongs to the methyltransferase superfamily. RsmH family.

The protein resides in the cytoplasm. It carries out the reaction cytidine(1402) in 16S rRNA + S-adenosyl-L-methionine = N(4)-methylcytidine(1402) in 16S rRNA + S-adenosyl-L-homocysteine + H(+). In terms of biological role, specifically methylates the N4 position of cytidine in position 1402 (C1402) of 16S rRNA. The chain is Ribosomal RNA small subunit methyltransferase H from Leptospira biflexa serovar Patoc (strain Patoc 1 / ATCC 23582 / Paris).